The sequence spans 164 residues: MVSSAVKCGICRGVDGKYKCPKCGVRYCSLKCYKDAAKHVHKESEQPRAGTEANVEVVNNDKIINSSLAMNKTLKTKAFDDIYQNSAELQELLKYNTVKFHLAKVYRILSSTVNDGSSGKMNSDLQKELAVNYLNTLRYGGIHYNEAIEEFCQILLDKLNAVKK.

Residues cysteine 8, cysteine 11, cysteine 28, and cysteine 32 each coordinate Zn(2+). Residues 8–49 form an HIT-type; degenerate zinc finger; it reads CGICRGVDGKYKCPKCGVRYCSLKCYKDAAKHVHKESEQPRA.

In Saccharomyces cerevisiae (strain ATCC 204508 / S288c) (Baker's yeast), this protein is Protein HIT1 (HIT1).